The sequence spans 178 residues: Cytochrome b6-f complex iron-sulfur subunit (178 aa).

Residues 20–42 (LLTFGTATGVALGALYPVANYFM) traverse the membrane as a helical segment. One can recognise a Rieske domain in the interval 65-161 (KTGWLASHQA…VDVDDDAVLV (97 aa)). [2Fe-2S] cluster is bound by residues Cys107, His109, Cys125, and His128. A disulfide bridge links Cys112 with Cys127.

This sequence belongs to the Rieske iron-sulfur protein family. In terms of assembly, the 4 large subunits of the cytochrome b6-f complex are cytochrome b6, subunit IV (17 kDa polypeptide, PetD), cytochrome f and the Rieske protein, while the 4 small subunits are PetG, PetL, PetM and PetN. The complex functions as a dimer. It depends on [2Fe-2S] cluster as a cofactor.

It is found in the cellular thylakoid membrane. The enzyme catalyses 2 oxidized [plastocyanin] + a plastoquinol + 2 H(+)(in) = 2 reduced [plastocyanin] + a plastoquinone + 4 H(+)(out). Functionally, component of the cytochrome b6-f complex, which mediates electron transfer between photosystem II (PSII) and photosystem I (PSI), cyclic electron flow around PSI, and state transitions. This is Cytochrome b6-f complex iron-sulfur subunit from Prochlorococcus marinus subsp. pastoris (strain CCMP1986 / NIES-2087 / MED4).